A 399-amino-acid chain; its full sequence is Tryptophan synthase beta chain (399 aa).

Lysine 86 carries the post-translational modification N6-(pyridoxal phosphate)lysine.

The protein belongs to the TrpB family. In terms of assembly, tetramer of two alpha and two beta chains. It depends on pyridoxal 5'-phosphate as a cofactor.

The catalysed reaction is (1S,2R)-1-C-(indol-3-yl)glycerol 3-phosphate + L-serine = D-glyceraldehyde 3-phosphate + L-tryptophan + H2O. It functions in the pathway amino-acid biosynthesis; L-tryptophan biosynthesis; L-tryptophan from chorismate: step 5/5. Functionally, the beta subunit is responsible for the synthesis of L-tryptophan from indole and L-serine. The protein is Tryptophan synthase beta chain (trpB) of Buchnera aphidicola subsp. Schizaphis graminum (strain Sg).